Reading from the N-terminus, the 328-residue chain is tRNA(Ile)-lysidine synthase (328 aa).

35-40 contacts ATP; it reads SGGADS.

The protein belongs to the tRNA(Ile)-lysidine synthase family.

It localises to the cytoplasm. The catalysed reaction is cytidine(34) in tRNA(Ile2) + L-lysine + ATP = lysidine(34) in tRNA(Ile2) + AMP + diphosphate + H(+). Ligates lysine onto the cytidine present at position 34 of the AUA codon-specific tRNA(Ile) that contains the anticodon CAU, in an ATP-dependent manner. Cytidine is converted to lysidine, thus changing the amino acid specificity of the tRNA from methionine to isoleucine. The chain is tRNA(Ile)-lysidine synthase from Polaromonas naphthalenivorans (strain CJ2).